Here is a 533-residue protein sequence, read N- to C-terminus: CTP synthase (533 aa).

The amidoligase domain stretch occupies residues 1-265; it reads MTKFIFVTGG…PAYLARRLGL (265 aa). CTP is bound at residue S13. Position 13 (S13) interacts with UTP. 14 to 19 is a binding site for ATP; sequence GLGKGI. Residue Y54 coordinates L-glutamine. D71 contributes to the ATP binding site. Residues D71 and E139 each coordinate Mg(2+). Residues 146-148, 186-191, and K222 each bind CTP; these read DIE and KTKPTQ. UTP-binding positions include 186–191 and K222; that span reads KTKPTQ. The Glutamine amidotransferase type-1 domain occupies 290–532; the sequence is EIAIVGKYVK…VEAAKKKKYG (243 aa). G351 lines the L-glutamine pocket. C378 acts as the Nucleophile; for glutamine hydrolysis in catalysis. L-glutamine-binding positions include 379-382, E402, and R459; that span reads FGFQ. Catalysis depends on residues H505 and E507.

The protein belongs to the CTP synthase family. As to quaternary structure, homotetramer.

The enzyme catalyses UTP + L-glutamine + ATP + H2O = CTP + L-glutamate + ADP + phosphate + 2 H(+). It carries out the reaction L-glutamine + H2O = L-glutamate + NH4(+). The catalysed reaction is UTP + NH4(+) + ATP = CTP + ADP + phosphate + 2 H(+). Its pathway is pyrimidine metabolism; CTP biosynthesis via de novo pathway; CTP from UDP: step 2/2. Allosterically activated by GTP, when glutamine is the substrate; GTP has no effect on the reaction when ammonia is the substrate. The allosteric effector GTP functions by stabilizing the protein conformation that binds the tetrahedral intermediate(s) formed during glutamine hydrolysis. Inhibited by the product CTP, via allosteric rather than competitive inhibition. In terms of biological role, catalyzes the ATP-dependent amination of UTP to CTP with either L-glutamine or ammonia as the source of nitrogen. Regulates intracellular CTP levels through interactions with the four ribonucleotide triphosphates. The chain is CTP synthase from Thermococcus kodakarensis (strain ATCC BAA-918 / JCM 12380 / KOD1) (Pyrococcus kodakaraensis (strain KOD1)).